Consider the following 507-residue polypeptide: ATP synthase subunit alpha, chloroplastic (507 aa).

170–177 contacts ATP; that stretch reads GDRQTGKT.

This sequence belongs to the ATPase alpha/beta chains family. F-type ATPases have 2 components, CF(1) - the catalytic core - and CF(0) - the membrane proton channel. CF(1) has five subunits: alpha(3), beta(3), gamma(1), delta(1), epsilon(1). CF(0) has four main subunits: a, b, b' and c.

It is found in the plastid. It localises to the chloroplast thylakoid membrane. The enzyme catalyses ATP + H2O + 4 H(+)(in) = ADP + phosphate + 5 H(+)(out). Its function is as follows. Produces ATP from ADP in the presence of a proton gradient across the membrane. The alpha chain is a regulatory subunit. This Tetradesmus obliquus (Green alga) protein is ATP synthase subunit alpha, chloroplastic.